A 551-amino-acid chain; its full sequence is Solute carrier family 22 member 13 (551 aa).

Over 1–20 (MAQFVQVLAEIGDFGRFQIQ) the chain is Cytoplasmic. A helical membrane pass occupies residues 21–41 (LLILLCVLNFLSPFYFFAHVF). Over 42-138 (MVLDEPHHCA…LVCDRKHLKD (97 aa)) the chain is Extracellular. N-linked (GlcNAc...) asparagine glycans are attached at residues Asn-57, Asn-61, Asn-92, and Asn-104. Residues 139–159 (TTQSVFMAGLLVGTLMFGPLC) form a helical membrane-spanning segment. Residues 160–167 (DRIGRKAT) lie on the Cytoplasmic side of the membrane. A helical transmembrane segment spans residues 168-188 (ILAQLLLFTLIGLATAFVPSF). Over 189–195 (ELYMALR) the chain is Extracellular. A helical transmembrane segment spans residues 196-216 (FAVATAVAGLSFSNVTLLTEW). Over 217–224 (VGPSWRTQ) the chain is Cytoplasmic. A helical transmembrane segment spans residues 225 to 245 (AVVLAQCNFSLGQMVLAGLAY). Residues 246 to 251 (GFRNWR) are Extracellular-facing. Residues 252–272 (LLQITGTAPGLLLFFYFWALP) form a helical membrane-spanning segment. Over 273–332 (ESARWLLTRGRMDEAIQLIQKAASVNRRKLSPELMNQLVPEKTGPSGNALDLFRHPQLRK) the chain is Cytoplasmic. The chain crosses the membrane as a helical span at residues 333-353 (VTLIIFCVWFVDSLGYYGLSL). Position 354 (Gln-354) is a topological domain, extracellular. A helical transmembrane segment spans residues 355–375 (VGDFGLDVYLTQLIFGAVEVP). Over 376–397 (ARCSSIFMMQRFGRKWSQLGTL) the chain is Cytoplasmic. The helical transmembrane segment at 398 to 418 (VLGGLMCIIIIFIPADLPVVV) threads the bilayer. At 419-427 (TMLAVVGKM) the chain is on the extracellular side. A helical transmembrane segment spans residues 428-448 (ATAAAFTISYVYSAELFPTIL). The Cytoplasmic portion of the chain corresponds to 449 to 452 (RQTG). A helical membrane pass occupies residues 453–473 (MGLVGIFSRIGGILTPLVILL). Residues 474 to 478 (GEYHA) are Extracellular-facing. The chain crosses the membrane as a helical span at residues 479-499 (ALPMLIYGSLPIVAGLLCTLL). At 500-551 (PETHGQGLKDTLQDLELGPHPRSPKSVPSEKETEAKGRTSSPGVAFVSSTYF) the chain is on the cytoplasmic side. The interval 511-551 (LQDLELGPHPRSPKSVPSEKETEAKGRTSSPGVAFVSSTYF) is disordered. A compositionally biased stretch (basic and acidic residues) spans 527-536 (PSEKETEAKG). The segment covering 537–551 (RTSSPGVAFVSSTYF) has biased composition (polar residues).

The protein belongs to the major facilitator (TC 2.A.1) superfamily. Organic cation transporter (TC 2.A.1.19) family. Post-translationally, glycosylated. In terms of tissue distribution, ubiquitous. Highly expressed in kidneys and to a weaker extent in brain, heart, and intestine. In kidneys, expressed in proximal convoluted tubule. In kidneys, also expressed in cortical collecting duct, whereas glomerulus and thick ascending limb exhibit no expression.

The protein localises to the apical cell membrane. The enzyme catalyses urate(out) + (S)-lactate(in) = urate(in) + (S)-lactate(out). It carries out the reaction urate(out) + succinate(in) = urate(in) + succinate(out). The catalysed reaction is urate(out) + glutathione(in) = urate(in) + glutathione(out). It catalyses the reaction nicotinate(in) + urate(out) = nicotinate(out) + urate(in). The enzyme catalyses orotate(out) + a carboxylate(in) = orotate(in) + a carboxylate(out). In terms of biological role, anion antiporter that mediates the transport of urate, orotate and nicotinate in exchange for organic or inorganic anions. Translocates urate and orotate across the apical membrane of proximal tubule epithelial cells and involved in urate renal reabsorption. Possibly involved in orotate renal reabsorption and nicotinate intestinal reabsorption. Mediates urate uptake by an exchange with organic anions such as (S)-lactate, succinate, glutathione and nicotinate. Urate and orotate transports are Cl(-)-dependent. Shows similar transport characteristics as the urate/orotate renal antiporter SLC22A12/URAT1 and may act as a compensator of SLC22A12/URAT1 in certain conditions. This chain is Solute carrier family 22 member 13, found in Homo sapiens (Human).